Consider the following 785-residue polypeptide: Phenylalanine--tRNA ligase beta subunit (785 aa).

Positions 39–147 constitute a tRNA-binding domain; the sequence is FPIPRGVVFA…DALPPGTPLA (109 aa). The region spanning 399–474 is the B5 domain; the sequence is KPPEAIPFRP…RIQGYETIPL (76 aa). Mg(2+)-binding residues include Asp452, Asp458, Glu461, and Glu462. Positions 688 to 780 constitute an FDX-ACB domain; sequence SRHPAAFRDL…ALRARGFGLR (93 aa).

Belongs to the phenylalanyl-tRNA synthetase beta subunit family. Type 1 subfamily. As to quaternary structure, tetramer of two alpha and two beta subunits. It depends on Mg(2+) as a cofactor.

The protein localises to the cytoplasm. The enzyme catalyses tRNA(Phe) + L-phenylalanine + ATP = L-phenylalanyl-tRNA(Phe) + AMP + diphosphate + H(+). The polypeptide is Phenylalanine--tRNA ligase beta subunit (Thermus thermophilus (strain ATCC BAA-163 / DSM 7039 / HB27)).